A 1038-amino-acid polypeptide reads, in one-letter code: Fibronectin-binding protein A (1038 aa).

The signal sequence occupies residues 1-36 (MKNNLRYGIRKHKLGAASVFLGTMIVVGMGQDKEAA). The YSIRK-G/S signaling motif signature appears at 7-18 (YGIRKHKLGAAS). The disordered stretch occupies residues 37 to 193 (ASEQKTTTVE…VSEVKGTDVT (157 aa)). The interval 37 to 507 (ASEQKTTTVE…SNKADGNGKN (471 aa)) is ligand-binding A region. Residues 39–92 (EQKTTTVEENGNSATDNKTSETQTTATNVNHIEETQSYNATVTEQPSNATQVTT) are compositionally biased toward polar residues. Residues 112–121 (TVKEEEKPQV) are compositionally biased toward basic and acidic residues. The segment covering 122–164 (KETTQPQDNSGNQRQVDLTPKKVTQNQGTETQVEVAQPRTASE) has biased composition (polar residues). The span at 174 to 189 (DVAEAKEASDVSEVKG) shows a compositional bias: basic and acidic residues. Residues 189 to 507 (GTDVTSKVTV…SNKADGNGKN (319 aa)) are fibrinogen/elastin/tropoelastin-binding. Positions 508-868 (GQIIQDNDFE…EGQQTIEEDT (361 aa)) are fibronectin-binding. One copy of the B-1 repeat lies at 541–570 (ENQDNTPLDIDYHTAIDGEGGYVDGYIETI). Positions 541 to 600 (ENQDNTPLDIDYHTAIDGEGGYVDGYIETIEETDSSAIDIDYHTAVDSEVGHVGGYTESS) are 2 X approximate tandem repeats. A B-2 repeat occupies 571–600 (EETDSSAIDIDYHTAVDSEVGHVGGYTESS). Disordered stretches follow at residues 736 to 804 (LGYE…GGNI), 825 to 976 (IEED…GKVV), and 989 to 1015 (VAPTKKAQSKKSELPETGGEESTNKGM). The D-1 repeat unit spans residues 741-778 (GQNSGNQSFEEDTEEDKPKYEQGGNIVDIDFDSVPQIH). The segment at 741-898 (GQNSGNQSFE…TPEVPSEPET (158 aa)) is 4 X approximate tandem repeats. One copy of the D-2 repeat lies at 779–816 (GQNKGDQSFEEDTEKDKPKYEHGGNIIDIDFDSVPQIH). The stretch at 817-855 (GFNKHNEIIEEDTNKDKPNYQFGGHNSVDFEEDTLPKVS) is one D-3 repeat. Over residues 825–834 (IEEDTNKDKP) the composition is skewed to basic and acidic residues. One copy of the D-4 repeat lies at 856–898 (GQNEGQQTIEEDTTPPTPPTPEVPSEPETPMPPTPEVPSEPET). Residues 870-958 (PPTPPTPEVP…PAEPGKPVPP (89 aa)) are compositionally biased toward pro residues. WR repeat units lie at residues 899-912 (PTPPTPEVPSEPET), 913-926 (PTPPTPEVPSEPET), 927-940 (PTPPTPEVPSEPET), 941-954 (PTPPTPEVPAEPGK), and 955-968 (PVPPAKEEPKKPSK). The tract at residues 899–968 (PTPPTPEVPS…AKEEPKKPSK (70 aa)) is 5 X tandem repeats, Pro-rich (WR). An LPXTG sorting signal motif is present at residues 1002–1006 (LPETG). The residue at position 1005 (threonine 1005) is a Pentaglycyl murein peptidoglycan amidated threonine. A propeptide spans 1006-1038 (GGEESTNKGMLFGGLFSILGLALLRRNKKNNKA) (removed by sortase).

Its subcellular location is the secreted. It is found in the cell wall. Its function is as follows. Promotes bacterial attachment to multiple substrates, such as fibronectin (Fn), fibrinogen (Fg), elastin peptides and tropoelastin. This confers to S.aureus the ability to invade endothelial cells. Promotes adherence to and aggregation of activated platelets. The sequence is that of Fibronectin-binding protein A (fnbA) from Staphylococcus aureus (strain Mu50 / ATCC 700699).